The sequence spans 144 residues: UPF0306 protein Spro_0510 (144 aa).

The protein belongs to the UPF0306 family.

In Serratia proteamaculans (strain 568), this protein is UPF0306 protein Spro_0510.